The sequence spans 351 residues: Glycerol-1-phosphate dehydrogenase [NAD(P)+] (351 aa).

NAD(+) contacts are provided by residues Gly-97–Asp-101 and Thr-119–Ser-122. Asp-124 lines the substrate pocket. Ser-128 provides a ligand contact to NAD(+). Asp-171 is a substrate binding site. Residues Asp-171 and His-251 each coordinate Zn(2+). Residue His-255 participates in substrate binding. Zn(2+) is bound at residue His-267.

It belongs to the glycerol-1-phosphate dehydrogenase family. Homodimer. It depends on Zn(2+) as a cofactor.

The protein localises to the cytoplasm. It carries out the reaction sn-glycerol 1-phosphate + NAD(+) = dihydroxyacetone phosphate + NADH + H(+). The catalysed reaction is sn-glycerol 1-phosphate + NADP(+) = dihydroxyacetone phosphate + NADPH + H(+). It participates in membrane lipid metabolism; glycerophospholipid metabolism. Catalyzes the NAD(P)H-dependent reduction of dihydroxyacetonephosphate (DHAP or glycerone phosphate) to glycerol 1-phosphate (G1P). The G1P thus generated is used as the glycerophosphate backbone of phospholipids in the cellular membranes of Archaea. The polypeptide is Glycerol-1-phosphate dehydrogenase [NAD(P)+] (Saccharolobus islandicus (strain Y.N.15.51 / Yellowstone #2) (Sulfolobus islandicus)).